The following is a 236-amino-acid chain: MAGVVRLTTTSVQAIRVSSSFSSFATALNPLQPCLPPNSNLNSDKRLRLLSSSPSCSSSHYHPSSGLGSHLPLRRPKSQVVRVKVDENVAETEPPKWWERNAPNMVDIHSTEEFLSALSGAGERLVIVEFYGTWCASCRALFPKLCKTAVEHPDIVFLKVNFDENKPMCKSLNVRVLPFFHFYRGADGQLESFSCSLAKVKKAISVSPFPQLELGITLQTKRTTSLFFFDRIYQIL.

A chloroplast-targeting transit peptide spans 1 to 82; it reads MAGVVRLTTT…LRRPKSQVVR (82 aa). The Thioredoxin domain occupies 83 to 220; it reads VKVDENVAET…QLELGITLQT (138 aa). Residues cysteine 135 and cysteine 138 each act as nucleophile in the active site. Cysteine 135 and cysteine 138 are joined by a disulfide.

The protein belongs to the thioredoxin family.

The protein localises to the plastid. It is found in the chloroplast. Its function is as follows. Thiol-disulfide oxidoreductase that may participate in various redox reactions. Possesses insulin disulfide bonds reducing activity. The protein is Thioredoxin-like 2-2, chloroplastic of Arabidopsis thaliana (Mouse-ear cress).